A 103-amino-acid polypeptide reads, in one-letter code: Alpha-ketoglutarate dehydrogenase component 4 (103 aa).

Position 1 is an N-acetylmethionine (Met-1). Lys-5 carries the N6-succinyllysine modification. Residues 20 to 69 (TPLIRFPDRRDNPKPNVSEALRSAGLPSHSSVISQHSKGSKSPDLLMYQG) are disordered. Over residues 47–56 (SHSSVISQHS) the composition is skewed to polar residues. Phosphoserine occurs at positions 49, 61, and 90.

This sequence belongs to the alpha-ketoglutarate dehydrogenase component 4 family. Component of the 2-oxoglutarate dehydrogenase complex (OGDHC), composed of OGDH (2-oxoglutarate dehydrogenase; also called E1 subunit), DLST (dihydrolipoamide succinyltransferase; also called E2 subunit) and DLD (dihydrolipoamide dehydrogenase; also called E3 subunit), and the assembly factor KGD4. Within OGDHC complex, interacts (via N-terminus) with E3 subunit and (via C-terminus) with E2 subunit.

The protein localises to the mitochondrion. In terms of biological role, molecular adapter that is necessary to form a stable 2-oxoglutarate dehydrogenase enzyme complex (OGDHC). Enables the specific recruitment of E3 subunit to E2 subunit in the 2-oxoglutarate dehydrogenase complex (OGDHC). In Homo sapiens (Human), this protein is Alpha-ketoglutarate dehydrogenase component 4.